A 126-amino-acid chain; its full sequence is Putative regulator AldR (126 aa).

The protein belongs to the RutC family.

Implicated in the regulation of isoleucine biosynthesis. This Lactococcus lactis subsp. lactis (strain IL1403) (Streptococcus lactis) protein is Putative regulator AldR (aldR).